We begin with the raw amino-acid sequence, 100 residues long: Large ribosomal subunit protein uL23 (100 aa).

This sequence belongs to the universal ribosomal protein uL23 family. As to quaternary structure, part of the 50S ribosomal subunit. Contacts protein L29, and trigger factor when it is bound to the ribosome.

One of the early assembly proteins it binds 23S rRNA. One of the proteins that surrounds the polypeptide exit tunnel on the outside of the ribosome. Forms the main docking site for trigger factor binding to the ribosome. The protein is Large ribosomal subunit protein uL23 of Mycobacterium ulcerans (strain Agy99).